The following is an 859-amino-acid chain: Leucine--tRNA ligase (859 aa).

The short motif at 42–52 is the 'HIGH' region element; the sequence is PYPSGRLHMGH. The 'KMSKS' region signature appears at 618–622; sequence KMSKS. Lys-621 contacts ATP.

Belongs to the class-I aminoacyl-tRNA synthetase family.

The protein resides in the cytoplasm. It carries out the reaction tRNA(Leu) + L-leucine + ATP = L-leucyl-tRNA(Leu) + AMP + diphosphate. This chain is Leucine--tRNA ligase, found in Shewanella sp. (strain ANA-3).